A 607-amino-acid polypeptide reads, in one-letter code: Terpenoid synthase 9 (607 aa).

Mg(2+) is bound by residues Asp356, Asp360, Asn501, and Asp509. The DDXXD motif signature appears at 356 to 360; it reads DDTFD.

It belongs to the terpene synthase family. Tpsa subfamily. The cofactor is Mg(2+). Mn(2+) is required as a cofactor. As to expression, predominantly expressed in roots but also in stems, leaves and flowers.

The protein resides in the cytoplasm. Its pathway is secondary metabolite biosynthesis; terpenoid biosynthesis. Its function is as follows. Involved in terpene biosynthesis in roots. Possesses diterpene (C20) synthase activity in vitro. Does not seem to be involved in sesquiterpene (C15) biosynthesis. The chain is Terpenoid synthase 9 from Arabidopsis thaliana (Mouse-ear cress).